The primary structure comprises 301 residues: N-acetylmuramic acid 6-phosphate etherase (301 aa).

Positions 57 to 220 (IAETFMKNGR…TTGAMIKTGK (164 aa)) constitute an SIS domain. Glu85 (proton donor) is an active-site residue. The active site involves Glu116.

It belongs to the GCKR-like family. MurNAc-6-P etherase subfamily. In terms of assembly, homodimer.

The enzyme catalyses N-acetyl-D-muramate 6-phosphate + H2O = N-acetyl-D-glucosamine 6-phosphate + (R)-lactate. It participates in amino-sugar metabolism; 1,6-anhydro-N-acetylmuramate degradation. It functions in the pathway amino-sugar metabolism; N-acetylmuramate degradation. Its pathway is cell wall biogenesis; peptidoglycan recycling. Specifically catalyzes the cleavage of the D-lactyl ether substituent of MurNAc 6-phosphate, producing GlcNAc 6-phosphate and D-lactate. Together with AnmK, is also required for the utilization of anhydro-N-acetylmuramic acid (anhMurNAc) either imported from the medium or derived from its own cell wall murein, and thus plays a role in cell wall recycling. This is N-acetylmuramic acid 6-phosphate etherase from Pasteurella multocida (strain Pm70).